A 251-amino-acid chain; its full sequence is Probable transcriptional regulatory protein Swol_1435 (251 aa).

The disordered stretch occupies residues 1–23; that stretch reads MAGHSKWANIKHKKARSDEKRGK.

The protein belongs to the TACO1 family.

Its subcellular location is the cytoplasm. This chain is Probable transcriptional regulatory protein Swol_1435, found in Syntrophomonas wolfei subsp. wolfei (strain DSM 2245B / Goettingen).